Here is a 977-residue protein sequence, read N- to C-terminus: Disks large-associated protein 1 (977 aa).

Disordered stretches follow at residues Thr150–Ser203 and Lys349–Ala371. Phosphoserine is present on residues Ser169, Ser356, Ser359, Ser362, Ser366, Ser383, Ser412, Ser415, Ser419, Ser422, Ser431, Ser503, Ser510, and Ser562. At Thr563 the chain carries Phosphothreonine. Ser565 and Ser589 each carry phosphoserine. A Phosphothreonine modification is found at Thr590. Phosphoserine occurs at positions 592 and 595. Interaction with DYL2 stretches follow at residues Leu650–Glu661 and Ser672–Glu683. The segment at Trp899–Ser965 is disordered. Composition is skewed to basic and acidic residues over residues Asp903 to Ala912 and Ile928 to Lys943. Ser932 is subject to Phosphoserine. Over residues Val954–Ala963 the composition is skewed to polar residues. Residues Thr975 to Leu977 carry the PDZ-binding motif.

The protein belongs to the SAPAP family. As to quaternary structure, interacts with guanylate kinase-like domain of DLG1, DLG2, DLG3, DLG4 and AIP1. Interacts with the PDZ domain of SHANK1, SHANK2 and SHANK3. Found in a complex with DLG4 and SHANK1, SHANK2 or SHANK3. Found in a complex with DLG4 and BEGAIN. Interacts with DYL2 and LRFN1. Interacts with MPP2 (via the SH3-Guanylate kinase-like sub-module). In terms of processing, ubiquitinated by TRIM3; leading to proteasomal degradation. Expressed in brain.

Its subcellular location is the cell membrane. It is found in the postsynaptic density. The protein resides in the synapse. Functionally, part of the postsynaptic scaffold in neuronal cells. The chain is Disks large-associated protein 1 (DLGAP1) from Homo sapiens (Human).